The following is a 197-amino-acid chain: Holliday junction branch migration complex subunit RuvA (197 aa).

Residues 1 to 63 are domain I; it reads MYAYLKGIIT…EDAHLLYGFR (63 aa). The segment at 64 to 142 is domain II; that stretch reads SEDEKKLFLS…VAGDDLPAKI (79 aa). The segment at 143–147 is flexible linker; the sequence is AVQAS. Residues 148–197 form a domain III region; it reads AENQELEEAMEAMLALGYKATELKKIKKFFEGTTDTAENYIKSALKMLVK.

Belongs to the RuvA family. In terms of assembly, homotetramer. Forms an RuvA(8)-RuvB(12)-Holliday junction (HJ) complex. HJ DNA is sandwiched between 2 RuvA tetramers; dsDNA enters through RuvA and exits via RuvB. An RuvB hexamer assembles on each DNA strand where it exits the tetramer. Each RuvB hexamer is contacted by two RuvA subunits (via domain III) on 2 adjacent RuvB subunits; this complex drives branch migration. In the full resolvosome a probable DNA-RuvA(4)-RuvB(12)-RuvC(2) complex forms which resolves the HJ.

It localises to the cytoplasm. Functionally, the RuvA-RuvB-RuvC complex processes Holliday junction (HJ) DNA during genetic recombination and DNA repair, while the RuvA-RuvB complex plays an important role in the rescue of blocked DNA replication forks via replication fork reversal (RFR). RuvA specifically binds to HJ cruciform DNA, conferring on it an open structure. The RuvB hexamer acts as an ATP-dependent pump, pulling dsDNA into and through the RuvAB complex. HJ branch migration allows RuvC to scan DNA until it finds its consensus sequence, where it cleaves and resolves the cruciform DNA. The protein is Holliday junction branch migration complex subunit RuvA of Streptococcus pneumoniae (strain Taiwan19F-14).